Reading from the N-terminus, the 549-residue chain is NADH-quinone oxidoreductase subunit N (549 aa).

14 consecutive transmembrane segments (helical) span residues 26–46 (LSPL…EAFV), 57–77 (ALAM…VGAL), 96–116 (PSLF…LLIA), 148–168 (HTEV…FTAA), 171–191 (FLTM…LCGL), 206–226 (YFLL…MVYG), 253–273 (LLIG…TVPF), 297–317 (LVAA…TTVA), 321–341 (PMLW…AVTQ), 347–367 (LLAY…VAAN), 375–395 (MFYL…VTLV), 421–441 (AASL…SGFI), 466–486 (SAVT…AEPA), and 496–516 (GILT…LGIL).

The protein belongs to the complex I subunit 2 family. NDH-1 is composed of 14 different subunits. Subunits NuoA, H, J, K, L, M, N constitute the membrane sector of the complex.

Its subcellular location is the cell membrane. The enzyme catalyses a quinone + NADH + 5 H(+)(in) = a quinol + NAD(+) + 4 H(+)(out). In terms of biological role, NDH-1 shuttles electrons from NADH, via FMN and iron-sulfur (Fe-S) centers, to quinones in the respiratory chain. The immediate electron acceptor for the enzyme in this species is believed to be a menaquinone. Couples the redox reaction to proton translocation (for every two electrons transferred, four hydrogen ions are translocated across the cytoplasmic membrane), and thus conserves the redox energy in a proton gradient. This is NADH-quinone oxidoreductase subunit N from Thermobifida fusca (strain YX).